The following is a 414-amino-acid chain: 2,3-diketo-5-methylthiopentyl-1-phosphate enolase (414 aa).

Lys99 serves as the catalytic Proton acceptor. Substrate-binding positions include Lys148, 174 to 177 (KDDE), His265, Gly338, and 360 to 361 (GG). Mg(2+) is bound by residues Lys174, Asp176, and Glu177. Residue Lys174 is modified to N6-carboxylysine.

The protein belongs to the RuBisCO large chain family. Type IV subfamily. In terms of assembly, homodimer. Mg(2+) serves as cofactor.

It catalyses the reaction 5-methylsulfanyl-2,3-dioxopentyl phosphate = 2-hydroxy-5-methylsulfanyl-3-oxopent-1-enyl phosphate. It participates in amino-acid biosynthesis; L-methionine biosynthesis via salvage pathway; L-methionine from S-methyl-5-thio-alpha-D-ribose 1-phosphate: step 3/6. Catalyzes the enolization of 2,3-diketo-5-methylthiopentyl-1-phosphate (DK-MTP-1-P) into 2-hydroxy-3-keto-5-methylthiopentenyl-1-phosphate (HK-MTPenyl-1-P). The chain is 2,3-diketo-5-methylthiopentyl-1-phosphate enolase from Bacillus cereus (strain ATCC 10987 / NRS 248).